The sequence spans 274 residues: Light-independent protochlorophyllide reductase iron-sulfur ATP-binding protein (274 aa).

Residues 12-17 (GIGKST) and Lys41 each bind ATP. Position 16 (Ser16) interacts with Mg(2+). 2 residues coordinate [4Fe-4S] cluster: Cys97 and Cys131.

This sequence belongs to the NifH/BchL/ChlL family. As to quaternary structure, homodimer. Protochlorophyllide reductase is composed of three subunits; BchL, BchN and BchB. Requires [4Fe-4S] cluster as cofactor.

The enzyme catalyses chlorophyllide a + oxidized 2[4Fe-4S]-[ferredoxin] + 2 ADP + 2 phosphate = protochlorophyllide a + reduced 2[4Fe-4S]-[ferredoxin] + 2 ATP + 2 H2O. The protein operates within porphyrin-containing compound metabolism; bacteriochlorophyll biosynthesis (light-independent). Component of the dark-operative protochlorophyllide reductase (DPOR) that uses Mg-ATP and reduced ferredoxin to reduce ring D of protochlorophyllide (Pchlide) to form chlorophyllide a (Chlide). This reaction is light-independent. The L component serves as a unique electron donor to the NB-component of the complex, and binds Mg-ATP. The sequence is that of Light-independent protochlorophyllide reductase iron-sulfur ATP-binding protein from Chloroherpeton thalassium (strain ATCC 35110 / GB-78).